We begin with the raw amino-acid sequence, 145 residues long: MSQTILSTETIKVKAEARSKEEAIKAAGTLLVEKGYVEPNYVDKMFERETVTSTYLGNYLAIPHGTEEAKEQVIHSGMSVLVFDDPVDWDGQEVRVVIGIAGKGTEHLDILSKIAITFSEEENVERLLSLESAQEVLAFLGEVNE.

The 140-residue stretch at 4–143 (TILSTETIKV…QEVLAFLGEV (140 aa)) folds into the PTS EIIA type-2 domain. His64 (tele-phosphohistidine intermediate) is an active-site residue. Phosphohistidine; by HPr is present on His64.

Its subcellular location is the cytoplasm. Its function is as follows. The phosphoenolpyruvate-dependent sugar phosphotransferase system (sugar PTS), a major carbohydrate active transport system, catalyzes the phosphorylation of incoming sugar substrates concomitantly with their translocation across the cell membrane. The enzyme II CmtAB PTS system is involved in D-mannitol transport. This Halalkalibacterium halodurans (strain ATCC BAA-125 / DSM 18197 / FERM 7344 / JCM 9153 / C-125) (Bacillus halodurans) protein is Mannitol-specific phosphotransferase enzyme IIA component (mtlF).